The chain runs to 213 residues: Nicotinamidase (213 aa).

The Proton acceptor role is filled by Asp-10. Asp-52, His-54, and His-86 together coordinate Zn(2+). Lys-111 is an active-site residue. Residue Cys-156 is the Nucleophile of the active site.

This sequence belongs to the isochorismatase family.

It carries out the reaction nicotinamide + H2O = nicotinate + NH4(+). It catalyses the reaction pyrazinamide + H2O = pyrazine-2-carboxylate + NH4(+). It functions in the pathway cofactor biosynthesis; nicotinate biosynthesis; nicotinate from nicotinamide: step 1/1. Its function is as follows. Catalyzes the deamidation of nicotinamide (NAM) into nicotinate. Likely functions in the cyclical salvage pathway for production of NAD from nicotinamide. Functionally, is also able to hydrolyze the first-line antituberculous drug pyrazinamide (PZA) into pyrazinoic acid in vitro, but this reaction is not considered to be physiologically relevant. The chain is Nicotinamidase from Escherichia coli (strain K12).